The following is a 326-amino-acid chain: Mitochondrial glycine transporter (326 aa).

Solcar repeat units follow at residues 22 to 106 (SKTT…LRTS), 135 to 216 (SANL…LKRY), and 228 to 312 (SSSS…LILR). The next 6 helical transmembrane spans lie at 28-53 (FGAG…TRVQ), 81-107 (GTLP…RTSL), 138-163 (LATG…VRYE), 191-214 (GFGA…EQLK), 232-258 (INFV…KTRL), and 287-305 (GLGL…AWTV).

Belongs to the mitochondrial carrier (TC 2.A.29) family. SLC25A38 subfamily.

The protein localises to the mitochondrion inner membrane. The catalysed reaction is glycine(in) = glycine(out). Its function is as follows. Mitochondrial glycine transporter that imports glycine into the mitochondrial matrix. Plays an important role in providing glycine for the first enzymatic step in heme biosynthesis, the condensation of glycine with succinyl-CoA to produce 5-aminolevulinate (ALA) in the mitochondrial matrix. This Emericella nidulans (strain FGSC A4 / ATCC 38163 / CBS 112.46 / NRRL 194 / M139) (Aspergillus nidulans) protein is Mitochondrial glycine transporter.